A 132-amino-acid chain; its full sequence is Small ribosomal subunit protein uS8 (132 aa).

It belongs to the universal ribosomal protein uS8 family. As to quaternary structure, part of the 30S ribosomal subunit. Contacts proteins S5 and S12.

Its function is as follows. One of the primary rRNA binding proteins, it binds directly to 16S rRNA central domain where it helps coordinate assembly of the platform of the 30S subunit. This Exiguobacterium sibiricum (strain DSM 17290 / CCUG 55495 / CIP 109462 / JCM 13490 / 255-15) protein is Small ribosomal subunit protein uS8.